Consider the following 1020-residue polypeptide: Sodium/potassium-transporting ATPase subunit alpha-2 (1020 aa).

A propeptide spanning residues 1 to 5 (MGRGA) is cleaved from the precursor. The tract at residues 1–31 (MGRGAGREYSPAATTAENGGGKKKQKEKELD) is disordered. Residues 6–85 (GREYSPAATT…NALTPPPTTP (80 aa)) lie on the Cytoplasmic side of the membrane. Residue Ser10 is modified to Phosphoserine. The interaction with phosphoinositide-3 kinase stretch occupies residues 80-82 (PPP). A helical membrane pass occupies residues 86-106 (EWVKFCRQLFGGFSILLWIGA). Over 107 to 129 (ILCFLAYGIQAAMEDEPSNDNLY) the chain is Extracellular. A helical transmembrane segment spans residues 130 to 150 (LGVVLAAVVIVTGCFSYYQEA). Topologically, residues 151–286 (KSSKIMDSFK…VGRTPIAMEI (136 aa)) are cytoplasmic. Residues 212–227 (DNSSLTGESEPQTRSP) are compositionally biased toward polar residues. The disordered stretch occupies residues 212-231 (DNSSLTGESEPQTRSPEFTH). Residues 287-306 (EHFIQLITGVAVFLGVSFFV) form a helical membrane-spanning segment. Over 307-318 (LSLILGYSWLEA) the chain is Extracellular. The helical transmembrane segment at 319-336 (VIFLIGIIVANVPEGLLA) threads the bilayer. At 337 to 769 (TVTVCLTLTA…EEGRLIFDNL (433 aa)) the chain is on the cytoplasmic side. Asp374 serves as the catalytic 4-aspartylphosphate intermediate. Ser439, Ser450, Ser496, and Ser559 each carry phosphoserine. Position 570 is a phosphothreonine (Thr570). Ser587 and Ser672 each carry phosphoserine. Mg(2+) contacts are provided by Asp714 and Asp718. A helical transmembrane segment spans residues 770 to 789 (KKSIAYTLTSNIPEITPFLL). Over 790-799 (FIIANIPLPL) the chain is Extracellular. A helical transmembrane segment spans residues 800 to 820 (GTVTILCIDLGTDMVPAISLA). At 821-840 (YEAAESDIMKRQPRNSQTDK) the chain is on the cytoplasmic side. Ser826 bears the Phosphoserine mark. Residues 841-863 (LVNERLISMAYGQIGMIQALGGF) traverse the membrane as a helical segment. Over 864-915 (FTYFVILAENGFLPSRLLGIRLDWDDRTMNDLEDSYGQEWTYEQRKVVEFTC) the chain is Extracellular. A helical transmembrane segment spans residues 916-935 (HTAFFASIVVVQWADLIICK). Residues 936–948 (TRRNSVFQQGMKN) are Cytoplasmic-facing. Ser940 is modified (phosphoserine; by PKA). A helical membrane pass occupies residues 949 to 967 (KILIFGLLEETALAAFLSY). At 968–982 (CPGMGVALRMYPLKV) the chain is on the extracellular side. Residues 983-1003 (TWWFCAFPYSLLIFIYDEVRK) form a helical membrane-spanning segment. The Cytoplasmic segment spans residues 1004–1020 (LILRRYPGGWVEKETYY).

This sequence belongs to the cation transport ATPase (P-type) (TC 3.A.3) family. Type IIC subfamily. In terms of assembly, the sodium/potassium-transporting ATPase is composed of a catalytic alpha subunit, an auxiliary non-catalytic beta subunit and an additional regulatory subunit. Interacts with regulatory subunit FXYD1.

Its subcellular location is the membrane. It is found in the cell membrane. The enzyme catalyses K(+)(out) + Na(+)(in) + ATP + H2O = K(+)(in) + Na(+)(out) + ADP + phosphate + H(+). This is the catalytic component of the active enzyme, which catalyzes the hydrolysis of ATP coupled with the exchange of sodium and potassium ions across the plasma membrane. This action creates the electrochemical gradient of sodium and potassium, providing the energy for active transport of various nutrients. The chain is Sodium/potassium-transporting ATPase subunit alpha-2 (ATP1A2) from Homo sapiens (Human).